An 898-amino-acid polypeptide reads, in one-letter code: Magnesium-transporting ATPase, P-type 1 (898 aa).

Over 1 to 94 (MFKEIFTRLI…QPSPWWVHLW (94 aa)) the chain is Cytoplasmic. The chain crosses the membrane as a helical span at residues 95 to 115 (VCYRNPFNILLTILGAISYAT). A topological domain (extracellular) is located at residue E116. Residues 117 to 137 (DLFAAGVIALMVAISTLLNFI) form a helical membrane-spanning segment. The Cytoplasmic segment spans residues 138 to 287 (QEARSTKAAD…PNAFQQGISR (150 aa)). Residues 288 to 308 (VSMLLIRFMLVMAPVVLLING) form a helical membrane-spanning segment. Over 309–317 (YTKGDWWEA) the chain is Extracellular. Residues 318–335 (ALFALSVAVGLTPEMLPM) form a helical membrane-spanning segment. Position 331 (E331) interacts with Mg(2+). Residues 336–695 (IVTSTLARGA…IEGRRTFANM (360 aa)) are Cytoplasmic-facing. Residue D373 is the 4-aspartylphosphate intermediate of the active site. D641, D645, and N709 together coordinate Mg(2+). A helical transmembrane segment spans residues 696–715 (LKYIKMTASSNFGNVFSVLV). Topologically, residues 716-724 (ASAFLPFLP) are extracellular. A helical membrane pass occupies residues 725 to 744 (MLPLHLLIQNLLYDVSQVAI). Mg(2+)-binding residues include N734 and D738. At 745 to 766 (PFDNVDDEQIQKPQRWNPADLG) the chain is on the cytoplasmic side. Residues 767–790 (RFMIFFGPISSIFDILTFCLMWWV) traverse the membrane as a helical segment. At 791 to 799 (FHANTPETQ) the chain is on the extracellular side. A helical membrane pass occupies residues 800–818 (TLFQSGWFVVGLLSQTLIV). Topologically, residues 819 to 831 (HMIRTRRVPFIQS) are cytoplasmic. A helical membrane pass occupies residues 832 to 851 (CASWPLMIMTVIVMIVGIAL). Residues 852-866 (PFSPLASYLQLQALP) are Extracellular-facing. The helical transmembrane segment at 867–886 (LSYFPWLVAILAGYMTLTQL) threads the bilayer. At 887–898 (VKGFYSRRYGWQ) the chain is on the cytoplasmic side.

The protein belongs to the cation transport ATPase (P-type) (TC 3.A.3) family. Type IIIB subfamily.

The protein resides in the cell inner membrane. It carries out the reaction Mg(2+)(out) + ATP + H2O = Mg(2+)(in) + ADP + phosphate + H(+). Mediates magnesium influx to the cytosol. This chain is Magnesium-transporting ATPase, P-type 1 (mgtA), found in Escherichia coli O157:H7.